Here is a 374-residue protein sequence, read N- to C-terminus: Alanine racemase (374 aa).

Catalysis depends on K34, which acts as the Proton acceptor; specific for D-alanine. N6-(pyridoxal phosphate)lysine is present on K34. R147 is a binding site for substrate. The active-site Proton acceptor; specific for L-alanine is the Y271. Position 319 (M319) interacts with substrate.

The protein belongs to the alanine racemase family. Pyridoxal 5'-phosphate is required as a cofactor.

It catalyses the reaction L-alanine = D-alanine. The protein operates within amino-acid biosynthesis; D-alanine biosynthesis; D-alanine from L-alanine: step 1/1. In terms of biological role, catalyzes the interconversion of L-alanine and D-alanine. May also act on other amino acids. The polypeptide is Alanine racemase (alr) (Actinobacillus pleuropneumoniae serotype 5b (strain L20)).